Here is a 109-residue protein sequence, read N- to C-terminus: Ig kappa chain V region S211 (109 aa).

The segment at 1-23 (DVQMTQSPSYLAASPGESVSISC) is framework-1. The complementarity-determining-1 stretch occupies residues 24 to 35 (KASNKSISNNLA). Positions 36–50 (WYZZKPGKANKLLIS) are framework-2. Positions 51 to 57 (SGSTLQS) are complementarity-determining-2. Residues 58-89 (GTPSRFSGSGSDTDFTLTIRSLEFQDFAVYYC) form a framework-3 region. The complementarity-determining-3 stretch occupies residues 90–98 (ZZYNEPYYT). Residues 99–108 (FGAGTMLELK) form a framework-4 region.

This Rattus norvegicus (Rat) protein is Ig kappa chain V region S211.